Reading from the N-terminus, the 241-residue chain is Corrinoid adenosyltransferase MMAB (241 aa).

The transit peptide at 1–26 (MAVWGPGGRLGLRGCLGARKLLCPRF) directs the protein to the mitochondrion. The disordered stretch occupies residues 27–69 (QSRGPQGVEDGDRPQPSSKTPKVPKIYTKTGDKGFSSTFTGER). ATP-binding positions include 54–63 (TKTGDKGFSS) and K72. Phosphoserine is present on S128. 184-188 (RRAER) contacts ATP. K205 is modified (N6-succinyllysine). N208 provides a ligand contact to ATP. At K224 the chain carries N6-acetyllysine; alternate. K224 is subject to N6-succinyllysine; alternate.

The protein belongs to the Cob(I)alamin adenosyltransferase family. In terms of assembly, homotrimer.

The protein resides in the mitochondrion. It carries out the reaction cob(I)alamin-[corrinoid adenosyltransferase] + ATP = apo-[corrinoid adenosyltransferase] + adenosylcob(III)alamin + triphosphate. Its function is as follows. Converts cob(I)alamin to adenosylcobalamin (adenosylcob(III)alamin), a coenzyme for methylmalonyl-CoA mutase, therefore participates in the final step of the vitamin B12 conversion. Generates adenosylcobalamin (AdoCbl) and directly delivers the cofactor to MUT in a transfer that is stimulated by ATP-binding to MMAB and gated by MMAA. The sequence is that of Corrinoid adenosyltransferase MMAB from Bos taurus (Bovine).